Here is a 4047-residue protein sequence, read N- to C-terminus: MIPNLQLFLSLILFGLLNHVSSIDYEEIHIEDSYETRSRILMVDGNVWLHAGKDKNITFKTTGNGRIYVDETDVSKLPDIASFKQLVGRIENTSQMFTTLKSRQDTQTSAMRVVLNSAKHYLVALRNMTLEVNILKKWKTDKMARDMRRRGLLVKMTRQIIGINKLIAINACDPNKCSNGGTCIPSFGAKFTCLCPPHFTGTTCEADIDECSVYNGTTAGCQNNGTCINNRGGFECQCQSGYHGSLCQYHMSACSKTFELCGPHGHCIESIVDPTGQSSSDTTTYKCICDWGFKVSSDKNNPTCVDVNECESNPCHPGVDCINLPGSFVCSGCPKGYKTDGNVCIDVNECEGEIRVCSPLSKCHNTLGSYYCDSCPTGYSGDGGNCVKDDSCVKNKCHKLATCKVTDDGYSAVGDYTCYCPDGYVGDGIGEEGCVKSASNVCQNHNCVNAGKCKPTSDTEYKCECEAGFLGKFCEKTSPCQTNPCKNGGTCIAVENSAYCDCPEHFFGRACEEEEEHCGSHFTHSSGNYTFDLQRSNKTELSICDFVFNIPAANSAVVMTFTEFDKFTQEGSGPTDCAKTDANLTLYDGPEDSSSEFATFCGDSHSVHAPLSDTPITMTSTGAMLRFRGTQGSFTIKWETVERKCGYRSSKPEGIISVPQNHQDIVCEWFISAPGGKIIEVTIPPVSMHSKDIEKCDQNSLEIYDGYATYDKHRILETCSSTLESQVVRTTGPFLTVAFISNMLQSDAGLETIRGFVLKYKFTTPDRECGAEIDNDSNDFSFSGVIESPNYGSLYPPNMDCTWKINGTLSNGSYSGDMVLKLTFDEYDVKSGFSANGPGMHYRSFRRLLPRNEVEYGIAPGFSRVFAYRNLFDMGTCTNDFLKIHDGDGTLVQETCNPRRPPNVLTVNNPAAVLTFHSDSAEQGKGFRIQYEMLCEKRVNGNGTIQTWNFPNGGAAGTCTYIIEAPKTHVISVRFLTIGLRVLPMSECFYTPNAVETYENYVEFSGGRTDNALFNRRYVCARYPFVEGAWMSVSAARRLQIKVGSDGNPMFKGLSLEYKTSDVGCGGVFSSMTGTISSPNYPEKYQPHMHCVYNLYVSWSKTVKLTFDVFDLEVTPAKSCEYDRVEIYTSYHNETVHGELLGKFCGAMIPPSIYSTTNTMAVVFVSDRSVAGPGWNAKFEAVSRKTTCDFTLTAPSNNLIFDPQQLKFDKCTYHIAVHENQRILIKMNNMSLPCDKSSLMFRNGPSETSPPFSSLPPESEICTPKVNYMPVIRSFSNRVTIVYKSINSEGSFFNLTYETITSGCGGRVDGLTGIVSAPQYPLGDKKNLKCDWTVAVALGNKVRFALTALDDLNSSDSGGFCPLFAANRIDFFDSALQGNQHLKRYCAKEMASEPITSDDNELIIKYVQSGGFQSKKIFGFSGHFTTLCNGIVHEAISGSIQSPGYPYKVYSNQFCTWTIKVPKGNRIVATVHHFSISQKSYFEGGINCITDMLKVDDTDLAEAEVTFKKTDYNITNSVNKYCDKAIPRVIRSRHNSMKLTYSSQGDPTNQFWLSWNTLGCSRDITAPQQLIITKENIDPEVDEFECQYKIQAPIGKQINLKIDKMDILPIGTNCTYTKDFSGFAIFMSDSNKSGTPFQTYCSSINQQNISSHTNELFLFLSMKKDKLKTNVFFNATVEFVDVPQSSQSDICGQVINLERGKKNYITSPGYPSAYLPGIKCNFLINAPPGYHIEYALEKYYSPYYHDDRKTDKPRFMSPYTANYTCKWYLAYNVGMLSFYEGNSSSSSPVERLCDESDTVQTFELYASQSLVIFEGASNYMSQKSGEGVRDQIGFVLSMIPKCGGVVYAESKPQTISLYHEGEGICNVTIKKKDPQDSEINIRLEEYTKLNSSSTHTIDDRIDIYVGGVLKYTEMLKATDNTMQEYASDEEMMISVQNANAPHSAIIVVSTDDKSCGGEVRHSQGTIYAPTRRLDKPFDCGWAISNSNGNTVTLSILDHNLKSTPNCTDSYIEIRANNSSGKLIKRQCDISSIDSTEYESQSLYVFLRYRPSASDGNDDDDDTPDIDQQDSNKRPLFKARYEKVSGGRPKSRYVSSPMIDNTEMMVWTLDIVDEKAGILVKFIDLYLPSPTSYLRFTESGENDDVASSDYEEVTGVMAPAEKFFETNLIRVYGKLEKSDKFSFTWDPVPLNYRNLTLAKDKPAKVYDCGGDLTPTYEWDYFTNPLPAGQSFGYEENLHCRWIIRRPMFTGIELKFDYLELEDVQNCAFDFVSFRLQFDDQPEENDDVDLSSVSKHCALVRSNNTFNFSVNRALHIHFVTDRSRHGIGFKLKYRLTCNSFEHIRPGIFFEHTLTSPNYDGNFHTPSVWKCQYSLIIESNRKVSVEIVDLDIQENSPCSYNNALILGNRFSELVETHSQYSKSSKYCGKLEQGERLNFTSARGRLFIKYNSGPNSRKGFKMIIKEQLTECPSGVLHVDDNSPSRVLNSPEFPQRIPNSVECEYVMAAPNGHRLMLTFDSENFDIDGNQKNCDLLDYIEIRDGPTVHSEVIGIYCGNQAPSTIFSTTNFLYMKLHTSEYGKSRRFVATYGIATCGGTVMVRENVTTHITSPSFPYPFATPVQCQWNVKSPNTHMIEAKVDHVWLFYNPNCTMEQLMIRDGNSTANPLIGPVCVPRHAPDVFTRSASNQITVQFTSNSTTTRGGRQYCSNKKCGFDVAVTMSGEKCGGRITNLIGTLTPPGYPGKLLSHVKCIWDFKMKPGFIYRFKITFPGANAYHKFDNQVFRIAKQHCFPDVAVVEGFPPYDGAQYSTYFCKNETQITSITDTIRIVYDDSHTREMISAIGNDQPLNSTFYAPFTIDYMAIPANSENQGCTLQINKNLTTEFHLRNKVNGKGVGLDSFCHVSIEKPANFESVHIEISDYKADSELQPAGAKCFSWGAHLKIKSDEPVPIETTVCDGKSMKNKQSEMIYVNPQIDLFISQLFRDQEGQQFNLTIEFQKCGGVISSPNTGDITSPNFGSGLKYLPGSKCRWVLEAPEGQIVKVKIVEMQIAYDHECENDHLIIGEGRQADVNTIHKYCHKMDGEQEQKLEDRFKIIKSHGRYLTLIWVTNMKYEEAGWKIQYEFLNENEECGYHTSGMSGTIYTPMFGDKDYENDLECVWDIQVPLGYHINLKFKDFDVETAENCAKDQLLISQEHSTRANSPNGDYYFLFQDEEKETPLCGIEHPKDFESESNRVRLNFTTDSQTTARGFRVNWEAECGAIYRLNHGVITSPYYPNGYPNDITCTYLIAPPDQNSVIAIKFADFDLATMRTSFGRAPCEDDYLQIIDTGTDRVLHTFCASEPMPKDALVFKGAIGLKFVSDKSYYWMEEDNKYGRKGSKGFQLAYSINKCGDNIELREGTGFITTVTSPAFPLPYTKDLDCVWNITTDPNRQLNIRFEEMKLEAFHDCSADYIEFFDSSDIMANKTLGKFCGTMDKIPQYRIVTSGPNLLIHMRTDFNVNSGGFKLAVISSLGQKEGCGGKLTATTSWQTLTSPKDEDGNYPPALLCGWTISGPVDSQLQIRIDGVDTEQLEYPPGDRPSPECIDALAIYDGQEFFSPLLAGDICTSGTPLPKILYTSHRHAFITFETDRDGTGRGFNISYSIVDSDCGGWLKATNEIKTLVYKGITSDDNKEMNKERSHQRCRFMIQGPKTEPVIVNFQQFNIPSKAGDCSDSFVEIRDVGSLQECKHPACAREPNQRKITKLCGTHVPTSHVSNTNTIQIIVSADIMPNKNQSRPSLKFEYNILDSCNRTIDTNTIKSGRLTSPNYPQVYSENSTCVTNLQSSNQKMLLVFNDFTLEEPNNVNKNCDYDYLMLKEGDSNGTYYCGSTLPKALMTSGKDLTALLKSDHSLNHAGYDASYYTVVSERDDQIQFADSYELEGVISSIGYPNGYNKSYTQIFTLRPPNSHDCSIIFTDVSISMTQLPEECFQPTEEYLEIEVKFKTQVKKARIRSCTFALKKARELILEADNNDRYIKFAFKSDAKSENDGRGFKIRWKCHSIGKTQAVLPS.

Positions 1 to 22 are cleaved as a signal peptide; it reads MIPNLQLFLSLILFGLLNHVSS. N-linked (GlcNAc...) asparagine glycans are attached at residues Asn56, Asn92, and Asn127. Residues 168–205 enclose the EGF-like 1 domain; it reads AINACDPNKCSNGGTCIPSFGAKFTCLCPPHFTGTTCE. 26 disulfide bridges follow: Cys172/Cys183, Cys177/Cys193, Cys195/Cys204, Cys211/Cys227, Cys221/Cys236, Cys238/Cys247, Cys310/Cys321, Cys315/Cys330, Cys333/Cys344, Cys350/Cys363, Cys357/Cys372, Cys375/Cys386, Cys392/Cys403, Cys397/Cys418, Cys420/Cys434, Cys442/Cys453, Cys447/Cys463, Cys465/Cys474, Cys480/Cys491, Cys485/Cys500, Cys502/Cys511, Cys518/Cys544, Cys577/Cys601, Cys645/Cys667, Cys696/Cys719, and Cys769/Cys801. In terms of domain architecture, EGF-like 2; calcium-binding spans 207–248; it reads DIDECSVYNGTTAGCQNNGTCINNRGGFECQCQSGYHGSLCQ. N-linked (GlcNAc...) asparagine glycosylation is found at Asn215 and Asn224. Positions 306–345 constitute an EGF-like 3; calcium-binding domain; sequence DVNECESNPCHPGVDCINLPGSFVCSGCPKGYKTDGNVCI. The region spanning 346 to 387 is the EGF-like 4; calcium-binding domain; that stretch reads DVNECEGEIRVCSPLSKCHNTLGSYYCDSCPTGYSGDGGNCV. 3 EGF-like domains span residues 388–435, 438–475, and 476–512; these read KDDS…EGCV, ASNVCQNHNCVNAGKCKPTSDTEYKCECEAGFLGKFCE, and KTSPCQTNPCKNGGTCIAVENSAYCDCPEHFFGRACE. CUB domains are found at residues 518–641, 645–763, 769–934, 934–1061, 1065–1182, 1188–1300, 1304–1427, 1428–1558, 1560–1680, and 1691–1841; these read CGSH…WETV, CGYR…YKFT, CGAE…YEML, LCEK…YKTS, CGGV…FEAV, CDFT…YETI, CGGR…FTTL, CNGI…WNTL, CSRD…VEFV, and CGQV…MIPK. Residues Asn528, Asn537, and Asn583 are each glycosylated (N-linked (GlcNAc...) asparagine). Residues Asn775, Asn806, and Asn811 are each glycosylated (N-linked (GlcNAc...) asparagine). An intrachain disulfide couples Cys877 to Cys896. A glycan (N-linked (GlcNAc...) asparagine) is linked at Asn942. 3 disulfides stabilise this stretch: Cys1065–Cys1091, Cys1120–Cys1145, and Cys1188–Cys1211. An N-linked (GlcNAc...) asparagine glycan is attached at Asn1133. Asn1229 carries an N-linked (GlcNAc...) asparagine glycan. Cys1234 and Cys1262 are oxidised to a cystine. N-linked (GlcNAc...) asparagine glycosylation is present at Asn1294. Cys1304 and Cys1330 are joined by a disulfide. The N-linked (GlcNAc...) asparagine glycan is linked to Asn1353. Intrachain disulfides connect Cys1428/Cys1455, Cys1488/Cys1522, and Cys1560/Cys1586. Residue Asn1513 is glycosylated (N-linked (GlcNAc...) asparagine). N-linked (GlcNAc...) asparagine glycans are attached at residues Asn1613, Asn1631, Asn1648, and Asn1674. A disulfide bridge connects residues Cys1614 and Cys1641. Cysteines 1691 and 1720 form a disulfide. Asn1762, Asn1782, Asn1866, and Asn1890 each carry an N-linked (GlcNAc...) asparagine glycan. A disulfide bridge connects residues Cys1955 and Cys1979. The 129-residue stretch at 1955 to 2083 folds into the CUB 11 domain; sequence CGGEVRHSQG…PLFKARYEKV (129 aa). Residues Asn2005, Asn2016, and Asn2017 are each glycosylated (N-linked (GlcNAc...) asparagine). Cysteines 2006 and 2027 form a disulfide. Positions 2052–2071 are disordered; it reads ASDGNDDDDDTPDIDQQDSN. The span at 2055-2067 shows a compositional bias: acidic residues; sequence GNDDDDDTPDIDQ. The N-linked (GlcNAc...) asparagine glycan is linked to Asn2193. Cystine bridges form between Cys2207-Cys2238 and Cys2265-Cys2295. 5 CUB domains span residues 2207 to 2334, 2335 to 2463, 2467 to 2588, 2590 to 2717, and 2721 to 2859; these read CGGD…YRLT, CNSF…IKEQ, CPSG…YGIA, CGGT…VTMS, and CGGR…YMAI. Residues Asn2301 and Asn2305 are each glycosylated (N-linked (GlcNAc...) asparagine). 2 disulfides stabilise this stretch: Cys2335/Cys2368 and Cys2395/Cys2424. The N-linked (GlcNAc...) asparagine glycan is linked to Asn2434. Intrachain disulfides connect Cys2467/Cys2498 and Cys2590/Cys2619. N-linked (GlcNAc...) asparagine glycosylation is found at Asn2599, Asn2645, Asn2657, and Asn2692. A disulfide bond links Cys2646 and Cys2668. 2 disulfide bridges follow: Cys2721-Cys2747 and Cys2786-Cys2809. Residues Asn2811, Asn2845, Asn2875, and Asn2988 are each glycosylated (N-linked (GlcNAc...) asparagine). 4 cysteine pairs are disulfide-bonded: Cys2996-Cys3025, Cys3052-Cys3074, Cys3127-Cys3154, and Cys3181-Cys3217. CUB domains lie at 2996 to 3121, 3127 to 3254, 3255 to 3385, 3387 to 3508, 3515 to 3641, 3645 to 3783, and 3786 to 3900; these read CGGV…YEFL, CGYH…WEAE, CGAI…YSIN, CGDN…VISS, CGGK…YSIV, CGGW…YNIL, and CNRT…YYTV. Asn3235 carries N-linked (GlcNAc...) asparagine glycosylation. 3 disulfides stabilise this stretch: Cys3255–Cys3281, Cys3315–Cys3335, and Cys3387–Cys3418. N-linked (GlcNAc...) asparagine glycans are attached at residues Asn3421 and Asn3461. 2 disulfide bridges follow: Cys3445/Cys3468 and Cys3515/Cys3544. A glycan (N-linked (GlcNAc...) asparagine) is linked at Asn3635. 2 cysteine pairs are disulfide-bonded: Cys3645/Cys3680 and Cys3708/Cys3742. Residues Asn3770, Asn3787, Asn3812, Asn3858, and Asn3930 are each glycosylated (N-linked (GlcNAc...) asparagine). Cystine bridges form between Cys3786/Cys3815 and Cys3845/Cys3863.

The protein resides in the secreted. In terms of biological role, cotransporter which plays a role in lipoprotein, vitamin and iron metabolism, by facilitating their uptake. The polypeptide is Cubilin homolog (Caenorhabditis elegans).